The sequence spans 439 residues: FK506-binding protein 59 (439 aa).

2 consecutive PPIase FKBP-type domains span residues Gly32 to Lys120 and Gly149 to Gly235. TPR repeat units lie at residues Ala252 to Thr285, Val297 to Asn330, and Val331 to Asn364.

Interacts with inaD and trpl, and may be part of the inaD signaling complex. Expression in the embryo is limited to three tissues: lymph glands, Garland cells and oenocyte cells.

It catalyses the reaction [protein]-peptidylproline (omega=180) = [protein]-peptidylproline (omega=0). May have a role in phototransduction; inhibits or prevents Ca(2+) induced stimulation of the trpl ion channel. The sequence is that of FK506-binding protein 59 from Drosophila melanogaster (Fruit fly).